The chain runs to 329 residues: Mitochondrial glycine transporter (329 aa).

Solcar repeat units follow at residues 19 to 103, 130 to 214, and 232 to 316; these read SKTT…LRQP, LSNW…LKRH, and SSSS…LILR. Helical transmembrane passes span 25 to 50, 78 to 104, 136 to 161, 189 to 212, 236 to 262, and 291 to 309; these read FAAGLCSGLTSSILLQPADLLKTRVQ, GTLPSALRTGFGSALYFTTLNALRQPL, LGTGAVARVAAGFVMMPVTVIKVRYE, GFGATAARDAPYAGLYVLFYEQLK, INFISGGLAAGLATTITNPFDAVKTRL, and GLGLRITRKALSSALAWTV.

It belongs to the mitochondrial carrier (TC 2.A.29) family. SLC25A38 subfamily.

It localises to the mitochondrion inner membrane. It catalyses the reaction glycine(in) = glycine(out). In terms of biological role, mitochondrial glycine transporter that imports glycine into the mitochondrial matrix. Plays an important role in providing glycine for the first enzymatic step in heme biosynthesis, the condensation of glycine with succinyl-CoA to produce 5-aminolevulinate (ALA) in the mitochondrial matrix. This chain is Mitochondrial glycine transporter, found in Aspergillus terreus (strain NIH 2624 / FGSC A1156).